We begin with the raw amino-acid sequence, 336 residues long: Cycloartenol-C-24-methyltransferase (336 aa).

N-acetylmethionine is present on Met-1.

It belongs to the class I-like SAM-binding methyltransferase superfamily. Erg6/SMT family. In terms of tissue distribution, highly expressed in vascular tissue, mature leaves and in regions undergoing cellular expansion.

The enzyme catalyses cycloartenol + S-adenosyl-L-methionine = 24-methylenecycloartanol + S-adenosyl-L-homocysteine + H(+). It functions in the pathway steroid biosynthesis; sterol biosynthesis. In terms of biological role, catalyzes the methyl transfer from S-adenosyl-methionine to the C-24 of cycloartenol to form 24-methylene cycloartenol. This chain is Cycloartenol-C-24-methyltransferase (SMT1), found in Arabidopsis thaliana (Mouse-ear cress).